A 94-amino-acid polypeptide reads, in one-letter code: Large ribosomal subunit protein uL23 (94 aa).

This sequence belongs to the universal ribosomal protein uL23 family. As to quaternary structure, part of the 50S ribosomal subunit. Contacts protein L29, and trigger factor when it is bound to the ribosome.

One of the early assembly proteins it binds 23S rRNA. One of the proteins that surrounds the polypeptide exit tunnel on the outside of the ribosome. Forms the main docking site for trigger factor binding to the ribosome. The chain is Large ribosomal subunit protein uL23 from Treponema denticola (strain ATCC 35405 / DSM 14222 / CIP 103919 / JCM 8153 / KCTC 15104).